Consider the following 310-residue polypeptide: Iron ABC transporter substrate-binding lipoprotein MtsA (310 aa).

Positions 1–20 are cleaved as a signal peptide; sequence MGKRMSLILGAFLSVFLLVA. Cysteine 21 carries the N-palmitoyl cysteine lipid modification. Cysteine 21 carries S-diacylglycerol cysteine lipidation. Residues histidine 68, histidine 140, glutamate 206, and aspartate 281 each coordinate Fe(2+).

Belongs to the bacterial solute-binding protein 9 family. Lipoprotein receptor antigen (Lrai) subfamily.

It is found in the cell membrane. Its function is as follows. Part of the ATP-binding cassette (ABC) transport system MtsABC involved in iron import. Binds iron with high affinity and specificity and delivers it to the membrane permease for translocation into the cytoplasm. Has low affinity for Zn(2+) and Cu(2+). The protein is Iron ABC transporter substrate-binding lipoprotein MtsA (mtsA) of Streptococcus pyogenes serotype M1.